We begin with the raw amino-acid sequence, 120 residues long: Ig heavy chain V region AC38 15.3 (120 aa).

Residues 1-98 (QVQLLQPGTE…EDSAVYYCAR (98 aa)) are v segment. Cys22 and Cys96 are joined by a disulfide. Positions 99–105 (WDYEGDR) are d segment. The segment at 106–120 (YFDVWGTGTTVTVSS) is j segment.

The polypeptide is Ig heavy chain V region AC38 15.3 (Mus musculus (Mouse)).